The sequence spans 436 residues: 3-ketoacyl-CoA thiolase (436 aa).

C99 (acyl-thioester intermediate) is an active-site residue. Catalysis depends on proton acceptor residues H392 and C422.

Belongs to the thiolase-like superfamily. Thiolase family. In terms of assembly, heterotetramer of two alpha chains (FadJ) and two beta chains (FadI).

Its subcellular location is the cytoplasm. It catalyses the reaction an acyl-CoA + acetyl-CoA = a 3-oxoacyl-CoA + CoA. Its pathway is lipid metabolism; fatty acid beta-oxidation. Catalyzes the final step of fatty acid oxidation in which acetyl-CoA is released and the CoA ester of a fatty acid two carbons shorter is formed. In Citrobacter koseri (strain ATCC BAA-895 / CDC 4225-83 / SGSC4696), this protein is 3-ketoacyl-CoA thiolase.